We begin with the raw amino-acid sequence, 1109 residues long: RNA2 polyprotein (1109 aa).

It belongs to the nepoviruses RNA2 polyprotein family. Post-translationally, specific enzymatic cleavages in vivo by the P1 encoded 3C-like protease yield mature proteins.

It is found in the host cell junction. It localises to the host plasmodesma. Its subcellular location is the host cytoplasm. The protein resides in the host nucleus. The protein localises to the virion. In terms of biological role, implicated in RNA2 replication. Could also be required for nematode transmission of the virus. Functionally, transports viral genome to neighboring plant cells directly through plasmosdesmata, without any budding. The movement protein allows efficient cell to cell propagation, by bypassing the host cell wall barrier. Acts by forming a tubular structure at the host plasmodesmata, enlarging it enough to allow free passage of virion capsids. The chain is RNA2 polyprotein from Vitis rupestris (Grape).